The chain runs to 97 residues: U6-theraphotoxin-Hhn1a 4 (97 aa).

The N-terminal stretch at 1-33 (MLIKQFSRRSKNMKVQILLAFAALFVLAVGSYA) is a signal peptide. A propeptide spanning residues 34-61 (SESKKLDLRDALLSAMFSADYQLNPQER) is cleaved from the precursor. 3 disulfide bridges follow: Cys63-Cys77, Cys70-Cys82, and Cys76-Cys89.

This sequence belongs to the neurotoxin 10 (Hwtx-1) family. 12 (Hntx-12) subfamily. In terms of tissue distribution, expressed by the venom gland.

It localises to the secreted. Ion channel inhibitor. This chain is U6-theraphotoxin-Hhn1a 4, found in Cyriopagopus hainanus (Chinese bird spider).